A 312-amino-acid polypeptide reads, in one-letter code: GATA zinc finger domain-containing protein 20 (312 aa).

Disordered regions lie at residues Met1–Pro45 and Thr213–Asn232. Residues Gln29–Pro45 are compositionally biased toward low complexity. The GATA-type zinc finger occupies Cys260–Cys287.

The protein is GATA zinc finger domain-containing protein 20 (gtaT) of Dictyostelium discoideum (Social amoeba).